The chain runs to 618 residues: Matrix metalloproteinase-24 (618 aa).

The N-terminal stretch at 1–41 (MPRSRGGRAAPGQASRWSGWRAPGRLLPLLPALCCLAAAAG) is a signal peptide. Positions 42 to 128 (AGKPAGADAP…HLSRRRRNKR (87 aa)) are excised as a propeptide. Residues 42–575 (AGKPAGADAP…IDDVPGSVNA (534 aa)) are Extracellular-facing. The Cysteine switch motif lies at 110–117 (PRCGVPDH). Residues Cys-112 and His-255 each contribute to the Zn(2+) site. Residue Glu-256 is part of the active site. Zn(2+)-binding residues include His-259 and His-265. The disordered stretch occupies residues 296–352 (QKIYGPPAEPLEPTRPLPTLPVRRIHSPSERKHERHPRPPRPPLGDRPSTPGAKPNI). Over residues 302-314 (PAEPLEPTRPLPT) the composition is skewed to pro residues. 4 Hemopexin repeats span residues 350-398 (PNIC…WKGL), 399-444 (PARI…GSCL), 446-494 (REGI…KGIP), and 495-542 (QAPQ…WMGC). A disulfide bridge connects residues Cys-353 and Cys-542. Residues 576-596 (VAVVVPCTLSLCLLVLLYTIF) traverse the membrane as a helical segment. The Cytoplasmic segment spans residues 597 to 618 (QFKNKAGPQPVTYYKRPVQEWV). The short motif at 616-618 (EWV) is the PDZ-binding element.

It belongs to the peptidase M10A family. In terms of assembly, interacts with GRIP1 and GRIP2. Interacts (via PDZ-binding motif) with APBA3 (via PDZ domain). Requires Zn(2+) as cofactor. It depends on Ca(2+) as a cofactor. In terms of processing, cleaved by a furin endopeptidase in the trans-Golgi network. As to expression, mainly expressed in neuronal cells of both central and peripheral nervous systems. Expressed by CGRP-containing peptidergic nociceptors in dorsal root ganglia. Expressed in adult neural stem cell and ependymocytes. Expressed at low level in testis.

The protein resides in the cell membrane. It is found in the golgi apparatus. Its subcellular location is the trans-Golgi network membrane. The protein localises to the secreted. It localises to the extracellular space. The protein resides in the extracellular matrix. In terms of biological role, metalloprotease that mediates cleavage of N-cadherin (CDH2) and acts as a regulator of neuro-immune interactions and neural stem cell quiescence. Involved in cell-cell interactions between nociceptive neurites and mast cells, possibly by mediating cleavage of CDH2, thereby acting as a mediator of peripheral thermal nociception and inflammatory hyperalgesia. Key regulator of neural stem cells quiescence by mediating cleavage of CDH2, affecting CDH2-mediated anchorage of neural stem cells to ependymocytes in the adult subependymal zone, leading to modulate their quiescence. May play a role in axonal growth. Able to activate progelatinase A. May also be a proteoglycanase involved in degradation of proteoglycans, such as dermatan sulfate and chondroitin sulfate proteoglycans. Cleaves partially fibronectin, but not collagen type I, nor laminin. The sequence is that of Matrix metalloproteinase-24 (Mmp24) from Mus musculus (Mouse).